A 319-amino-acid polypeptide reads, in one-letter code: Pectinesterase (319 aa).

Pyrrolidone carboxylic acid is present on Gln-1. Substrate is bound by residues Thr-83 and Gln-113. Asp-136 functions as the Proton donor in the catalytic mechanism. Residues Cys-150 and Cys-170 are joined by a disulfide bond. Asp-157 (nucleophile) is an active-site residue. Residues Arg-225 and Trp-227 each coordinate substrate.

This sequence belongs to the pectinesterase family.

It localises to the secreted. Its subcellular location is the cell wall. The catalysed reaction is [(1-&gt;4)-alpha-D-galacturonosyl methyl ester](n) + n H2O = [(1-&gt;4)-alpha-D-galacturonosyl](n) + n methanol + n H(+). Its pathway is glycan metabolism; pectin degradation; 2-dehydro-3-deoxy-D-gluconate from pectin: step 1/5. In terms of biological role, catalyzes the deesterification of methyl-esterified D-galactosiduronic acid units in pectic compounds. It participates in modulating cell wall during fruit ripening, cell wall extension during pollen germination, and in defense mechanisms against pathogens. This chain is Pectinesterase, found in Daucus carota (Wild carrot).